The sequence spans 349 residues: UDP-3-O-acylglucosamine N-acyltransferase (349 aa).

The active-site Proton acceptor is the His-246.

It belongs to the transferase hexapeptide repeat family. LpxD subfamily. In terms of assembly, homotrimer.

The enzyme catalyses a UDP-3-O-[(3R)-3-hydroxyacyl]-alpha-D-glucosamine + a (3R)-hydroxyacyl-[ACP] = a UDP-2-N,3-O-bis[(3R)-3-hydroxyacyl]-alpha-D-glucosamine + holo-[ACP] + H(+). The protein operates within bacterial outer membrane biogenesis; LPS lipid A biosynthesis. Functionally, catalyzes the N-acylation of UDP-3-O-acylglucosamine using 3-hydroxyacyl-ACP as the acyl donor. Is involved in the biosynthesis of lipid A, a phosphorylated glycolipid that anchors the lipopolysaccharide to the outer membrane of the cell. The protein is UDP-3-O-acylglucosamine N-acyltransferase of Trichormus variabilis (strain ATCC 29413 / PCC 7937) (Anabaena variabilis).